The sequence spans 326 residues: CRISPR-associated endonuclease Cas1 (326 aa).

Mn(2+)-binding residues include E191, H255, and D269.

It belongs to the CRISPR-associated endonuclease Cas1 family. Homodimer. Interacts with Cas3, in the absence of crRNA. Requires Mg(2+) as cofactor. It depends on Mn(2+) as a cofactor.

CRISPR (clustered regularly interspaced short palindromic repeat), is an adaptive immune system that provides protection against mobile genetic elements (viruses, transposable elements and conjugative plasmids). CRISPR clusters contain sequences complementary to antecedent mobile elements and target invading nucleic acids. CRISPR clusters are transcribed and processed into CRISPR RNA (crRNA). Acts as a dsDNA endonuclease. Involved in the integration of spacer DNA into the CRISPR cassette. The sequence is that of CRISPR-associated endonuclease Cas1 from Pectobacterium atrosepticum (strain SCRI 1043 / ATCC BAA-672) (Erwinia carotovora subsp. atroseptica).